The sequence spans 147 residues: Small ribosomal subunit protein eS19 (147 aa).

Belongs to the eukaryotic ribosomal protein eS19 family. As to quaternary structure, component of the small ribosomal subunit.

The protein resides in the cytoplasm. Its subcellular location is the nucleus. In terms of biological role, component of the small ribosomal subunit. The ribosome is a large ribonucleoprotein complex responsible for the synthesis of proteins in the cell. Required for pre-rRNA processing and maturation of 40S ribosomal subunits. The chain is Small ribosomal subunit protein eS19 (rps19) from Gillichthys mirabilis (Long-jawed mudsucker).